The chain runs to 247 residues: MTEVSMSLTGHLKELRTRLLIILLSFFLAFFVGLFVSKPLILFLQKDDLPKEVILHVFKVTDAFQIYIEMAFIIGLILVFPVILYQLWAFVKPGLHASEQRITLRYIPITFLLFLCGVVFSYVITFPFILKFMFQFAAELGVETTIGLATYFQFLLQIVLSFGVLFELPMVIMLLTRLSLITPNGMRRARKYAYFCLLIIAAFIAPPEILSHLMITIPLIGLYEISIVVSGFTVRRMDKEMNMKKML.

5 helical membrane passes run 21-41 (IILL…KPLI), 71-91 (AFII…WAFV), 109-129 (ITFL…FPFI), 154-174 (FLLQ…VIML), and 195-215 (FCLL…HLMI).

The protein belongs to the TatC family. In terms of assembly, forms a complex with TatA.

Its subcellular location is the cell membrane. In terms of biological role, part of the twin-arginine translocation (Tat) system that transports large folded proteins containing a characteristic twin-arginine motif in their signal peptide across membranes. The polypeptide is Sec-independent protein translocase protein TatC (Listeria innocua serovar 6a (strain ATCC BAA-680 / CLIP 11262)).